The primary structure comprises 283 residues: Bifunctional protein FolD (283 aa).

NADP(+)-binding positions include 164–166, Ser-189, and Ile-230; that span reads GRS.

Belongs to the tetrahydrofolate dehydrogenase/cyclohydrolase family. Homodimer.

It carries out the reaction (6R)-5,10-methylene-5,6,7,8-tetrahydrofolate + NADP(+) = (6R)-5,10-methenyltetrahydrofolate + NADPH. The enzyme catalyses (6R)-5,10-methenyltetrahydrofolate + H2O = (6R)-10-formyltetrahydrofolate + H(+). It participates in one-carbon metabolism; tetrahydrofolate interconversion. Catalyzes the oxidation of 5,10-methylenetetrahydrofolate to 5,10-methenyltetrahydrofolate and then the hydrolysis of 5,10-methenyltetrahydrofolate to 10-formyltetrahydrofolate. This is Bifunctional protein FolD from Lacticaseibacillus casei (strain BL23) (Lactobacillus casei).